We begin with the raw amino-acid sequence, 382 residues long: Leucine carboxyl methyltransferase 1 (382 aa).

Polar residues predominate over residues M1–T11. The tract at residues M1–N45 is disordered. S-adenosyl-L-methionine is bound by residues R88, G121, D146, D193 to L194, and E230.

This sequence belongs to the methyltransferase superfamily. LCMT family.

It carries out the reaction [phosphatase 2A protein]-C-terminal L-leucine + S-adenosyl-L-methionine = [phosphatase 2A protein]-C-terminal L-leucine methyl ester + S-adenosyl-L-homocysteine. Its function is as follows. Methylates the carboxyl group of the C-terminal leucine residue of protein phosphatase 2A catalytic subunits to form alpha-leucine ester residues. This chain is Leucine carboxyl methyltransferase 1 (ppm1), found in Emericella nidulans (strain FGSC A4 / ATCC 38163 / CBS 112.46 / NRRL 194 / M139) (Aspergillus nidulans).